The following is a 92-amino-acid chain: Phospholemman (92 aa).

The N-terminal stretch at 1 to 20 is a signal peptide; it reads MASPGHILIVCVCLLSMASA. Residues 21-35 lie on the Extracellular side of the membrane; sequence EAPQEPDPFTYDYHT. A helical transmembrane segment spans residues 36-56; sequence LRIGGLTIAGILFILGILIIL. At 57–92 the chain is on the cytoplasmic side; sequence SKRCRCKFNQQQRTGEPDEEEGTFRSSIRRLSTRRR. Cys60 carries the S-palmitoyl cysteine lipid modification. Cys62 is subject to S-glutathionyl cysteine; alternate. A lipid anchor (S-palmitoyl cysteine; alternate) is attached at Cys62. Positions 66–92 are disordered; the sequence is QQQRTGEPDEEEGTFRSSIRRLSTRRR. At Thr79 the chain carries Phosphothreonine. Ser82 is modified (phosphoserine). At Ser83 the chain carries Phosphoserine; by PKA and PKC. A compositionally biased stretch (basic residues) spans 83-92; that stretch reads SIRRLSTRRR. Ser88 is modified (phosphoserine; by PKA). Thr89 carries the phosphothreonine; by PKC modification.

This sequence belongs to the FXYD family. In terms of assembly, homotetramer. Monomer. Regulatory subunit of the sodium/potassium-transporting ATPase (NKA) which is composed of a catalytic alpha subunit, a non-catalytic beta subunit and an additional regulatory subunit. The monomeric form associates with NKA while the oligomeric form does not. Interacts with the catalytic alpha-1 subunit ATP1A1. Also interacts with the catalytic alpha-2 and alpha-3 subunits ATP1A2 and ATP1A3. Very little interaction with ATP1A1, ATP1A2 or ATP1A3 when phosphorylated at Ser-83. Interacts with the non-catalytic beta-1 subunit ATP1B1. Oxidative stress decreases interaction with ATP1A1 but increases interaction with ATP1B1. In terms of processing, major plasma membrane substrate for cAMP-dependent protein kinase (PKA) and protein kinase C (PKC) in several different tissues. Phosphorylated in response to insulin and adrenergic stimulation. Phosphorylation at Ser-88 stimulates sodium/potassium-transporting ATPase activity while the unphosphorylated form inhibits sodium/potassium-transporting ATPase activity. Phosphorylation increases tetramerization, decreases binding to ATP1A1 and reduces inhibition of ATP1A1 activity. Phosphorylation at Ser-83 leads to greatly reduced interaction with ATP1A1, ATP1A2 and ATP1A3. May be phosphorylated by DMPK. Post-translationally, palmitoylation increases half-life and stability and is enhanced upon phosphorylation at Ser-88 by PKA. As to expression, in adult brain, highest levels are found in the cerebellum and in the lateral, third and fourth ventricles of the choroid plexus (at protein level). Also detected in cells of a portion of the ependymal lining of the lateral ventricle on its rostral surface posterior to the caudate putamen (at protein level). Expressed in a subset of neurons which secrete gonadotropin-releasing hormone.

It is found in the cell membrane. The protein resides in the sarcolemma. Its subcellular location is the apical cell membrane. It localises to the membrane. The protein localises to the caveola. It is found in the T-tubule. Its function is as follows. Associates with and regulates the activity of the sodium/potassium-transporting ATPase (NKA) which transports Na(+) out of the cell and K(+) into the cell. Inhibits NKA activity in its unphosphorylated state and stimulates activity when phosphorylated. Reduces glutathionylation of the NKA beta-1 subunit ATP1B1, thus reversing glutathionylation-mediated inhibition of ATP1B1. Contributes to female sexual development by maintaining the excitability of neurons which secrete gonadotropin-releasing hormone. The sequence is that of Phospholemman from Rattus norvegicus (Rat).